The sequence spans 1108 residues: Transmembrane protein 132C (1108 aa).

Positions 1 to 27 are cleaved as a signal peptide; sequence MRSEGAAPGPAAPLCGALSLLLGALLG. The Extracellular segment spans residues 28–922; sequence KVIEGHGVTD…LVQTPRGLSD (895 aa). N-linked (GlcNAc...) asparagine glycans are attached at residues asparagine 316 and asparagine 373. Positions 820–836 are enriched in basic and acidic residues; that stretch reads HASDRRQKGQHHERTGQ. The segment at 820–857 is disordered; the sequence is HASDRRQKGQHHERTGQDGHLYGSSPVEREEGALRRAT. A helical transmembrane segment spans residues 923-943; sequence LEIGMYALLGVFCLAILVFLI. Over 944–1108 the chain is Cytoplasmic; it reads NCATFALKYR…NYLEKLKDKA (165 aa). The tract at residues 1022–1072 is disordered; that stretch reads QSQIHRSADSGGRQGREQKQDPLHSPTSKRKKVKFTTFTTIPPDDSCPTVN.

This sequence belongs to the TMEM132 family.

It localises to the membrane. The sequence is that of Transmembrane protein 132C (TMEM132C) from Homo sapiens (Human).